Reading from the N-terminus, the 673-residue chain is UvrABC system protein B (673 aa).

Residues 26–183 (EGLEDGLAHQ…RRLAELQYTR (158 aa)) form the Helicase ATP-binding domain. 39 to 46 (GVTGSGKT) is an ATP binding site. Residues 92 to 115 (YYDYYQPEAYVPSSDTFIEKDASV) carry the Beta-hairpin motif. A Helicase C-terminal domain is found at 431–597 (QVDDLLSEIR…GLNKKVVDIL (167 aa)). The UVR domain maps to 633–668 (QQKIHELEGQMMQHAQNLEFEEAAQIRDQLHQLREL).

Belongs to the UvrB family. In terms of assembly, forms a heterotetramer with UvrA during the search for lesions. Interacts with UvrC in an incision complex.

It is found in the cytoplasm. In terms of biological role, the UvrABC repair system catalyzes the recognition and processing of DNA lesions. A damage recognition complex composed of 2 UvrA and 2 UvrB subunits scans DNA for abnormalities. Upon binding of the UvrA(2)B(2) complex to a putative damaged site, the DNA wraps around one UvrB monomer. DNA wrap is dependent on ATP binding by UvrB and probably causes local melting of the DNA helix, facilitating insertion of UvrB beta-hairpin between the DNA strands. Then UvrB probes one DNA strand for the presence of a lesion. If a lesion is found the UvrA subunits dissociate and the UvrB-DNA preincision complex is formed. This complex is subsequently bound by UvrC and the second UvrB is released. If no lesion is found, the DNA wraps around the other UvrB subunit that will check the other stand for damage. The polypeptide is UvrABC system protein B (Klebsiella pneumoniae subsp. pneumoniae (strain ATCC 700721 / MGH 78578)).